The chain runs to 72 residues: Mitotic-spindle organizing protein 1 (72 aa).

It belongs to the MOZART1 family. As to quaternary structure, part of the gamma-tubulin complex.

The protein resides in the cytoplasm. It is found in the cytoskeleton. Its subcellular location is the microtubule organizing center. It localises to the centrosome. The protein localises to the spindle. Its function is as follows. Required for gamma-tubulin complex recruitment to the centrosome. The chain is Mitotic-spindle organizing protein 1 (mzt1) from Xenopus laevis (African clawed frog).